A 321-amino-acid chain; its full sequence is MTKYALVGDVGGTNARLALCDMTSGEISQAKTYSGLDYPSLEAVVRVYLDEHNARVEDGCIAIACPITGDWVAMTNHTWAFSIAEMKKNLGFSHLEIINDFTAVSMAIPMLRKEHLIQFGGAEPVAGKPIAVYGAGTGLGVAHLVHVDKRWISLPGEGGHVDFAPNSEEEGIILEELRAEIGHVSAERVLSGPGLVNLYRAIVKSDGRLPENLQPKDITERALADTCIDSRRALSLFCVIMGRFGGNLALTLGTFGGVYIAGGIVPRFLEFFKASGFRGGFEDKGRFKAYVQDIPVYLIVHDNPGLLGSGAHLRQTLGQIL.

8 to 13 (GDVGGT) serves as a coordination point for ATP.

The protein belongs to the bacterial glucokinase family.

Its subcellular location is the cytoplasm. The catalysed reaction is D-glucose + ATP = D-glucose 6-phosphate + ADP + H(+). This Citrobacter koseri (strain ATCC BAA-895 / CDC 4225-83 / SGSC4696) protein is Glucokinase.